Consider the following 537-residue polypeptide: Protein ST7 homolog (537 aa).

Residues 15–35 traverse the membrane as a helical segment; the sequence is FYVALTGTSSLISGLILIFEW. Positions 61–111 are disordered; that stretch reads SDGQSESSNGSGSSSSSGSSSSSNGGAGGGGSGGAGASGSGSATTSTGTQM. Low complexity predominate over residues 67-84; it reads SSNGSGSSSSSGSSSSSN. The span at 85–99 shows a compositional bias: gly residues; the sequence is GGAGGGGSGGAGASG. Over residues 100-109 the composition is skewed to low complexity; the sequence is SGSATTSTGT. The helical transmembrane segment at 472-492 threads the bilayer; that stretch reads LPFFILFTAGLCSITALLALA.

This sequence belongs to the ST7 family.

It localises to the membrane. This is Protein ST7 homolog from Drosophila melanogaster (Fruit fly).